The sequence spans 251 residues: HTH-type transcriptional regulator UlaR (251 aa).

The region spanning 3–58 (EAQRHQILLEMLAQLGFVTVEKVVERLGISPATARRDINKLDESGKLKKVRNGAEA) is the HTH deoR-type domain. The segment at residues 20-39 (VTVEKVVERLGISPATARRD) is a DNA-binding region (H-T-H motif).

The protein resides in the cytoplasm. In terms of biological role, represses ulaG and the ulaABCDEF operon. This is HTH-type transcriptional regulator UlaR from Escherichia coli O127:H6 (strain E2348/69 / EPEC).